Here is a 93-residue protein sequence, read N- to C-terminus: Small ribosomal subunit protein uS19 (93 aa).

Belongs to the universal ribosomal protein uS19 family.

Functionally, protein S19 forms a complex with S13 that binds strongly to the 16S ribosomal RNA. This is Small ribosomal subunit protein uS19 from Thermoanaerobacter pseudethanolicus (strain ATCC 33223 / 39E) (Clostridium thermohydrosulfuricum).